The sequence spans 938 residues: Bifunctional uridylyltransferase/uridylyl-removing enzyme (938 aa).

A uridylyltransferase region spans residues 1–379 (MPPRLRPTHL…PGRAQKRKPL (379 aa)). The interval 380-733 (DEPGFHEVGG…GRIRSELNAA (354 aa)) is uridylyl-removing. Positions 495-617 (VDEHTLRAVG…VQSPERLRLL (123 aa)) constitute an HD domain. 2 consecutive ACT domains span residues 734 to 813 (EVVV…PVAR) and 845 to 924 (VVEA…TAQA).

It belongs to the GlnD family. Requires Mg(2+) as cofactor.

It carries out the reaction [protein-PII]-L-tyrosine + UTP = [protein-PII]-uridylyl-L-tyrosine + diphosphate. The catalysed reaction is [protein-PII]-uridylyl-L-tyrosine + H2O = [protein-PII]-L-tyrosine + UMP + H(+). Uridylyltransferase (UTase) activity is inhibited by glutamine, while glutamine activates uridylyl-removing (UR) activity. In terms of biological role, modifies, by uridylylation and deuridylylation, the PII regulatory proteins (GlnB and homologs), in response to the nitrogen status of the cell that GlnD senses through the glutamine level. Under low glutamine levels, catalyzes the conversion of the PII proteins and UTP to PII-UMP and PPi, while under higher glutamine levels, GlnD hydrolyzes PII-UMP to PII and UMP (deuridylylation). Thus, controls uridylylation state and activity of the PII proteins, and plays an important role in the regulation of nitrogen assimilation and metabolism. The sequence is that of Bifunctional uridylyltransferase/uridylyl-removing enzyme from Phenylobacterium zucineum (strain HLK1).